We begin with the raw amino-acid sequence, 84 residues long: NAD(P)H-quinone oxidoreductase subunit O (84 aa).

This sequence belongs to the complex I NdhO subunit family. In terms of assembly, NDH-1 can be composed of about 15 different subunits; different subcomplexes with different compositions have been identified which probably have different functions.

The protein resides in the cellular thylakoid membrane. It carries out the reaction a plastoquinone + NADH + (n+1) H(+)(in) = a plastoquinol + NAD(+) + n H(+)(out). The catalysed reaction is a plastoquinone + NADPH + (n+1) H(+)(in) = a plastoquinol + NADP(+) + n H(+)(out). In terms of biological role, NDH-1 shuttles electrons from an unknown electron donor, via FMN and iron-sulfur (Fe-S) centers, to quinones in the respiratory and/or the photosynthetic chain. The immediate electron acceptor for the enzyme in this species is believed to be plastoquinone. Couples the redox reaction to proton translocation, and thus conserves the redox energy in a proton gradient. Cyanobacterial NDH-1 also plays a role in inorganic carbon-concentration. This is NAD(P)H-quinone oxidoreductase subunit O from Synechococcus sp. (strain CC9605).